We begin with the raw amino-acid sequence, 431 residues long: Serine--tRNA ligase (431 aa).

An L-serine-binding site is contributed by 236–238; sequence TAE. 267–269 contacts ATP; sequence RSE. Glutamate 290 serves as a coordination point for L-serine. An ATP-binding site is contributed by 354–357; that stretch reads EISS. Residue serine 389 coordinates L-serine.

Belongs to the class-II aminoacyl-tRNA synthetase family. Type-1 seryl-tRNA synthetase subfamily. Homodimer. The tRNA molecule binds across the dimer.

It localises to the cytoplasm. It carries out the reaction tRNA(Ser) + L-serine + ATP = L-seryl-tRNA(Ser) + AMP + diphosphate + H(+). The enzyme catalyses tRNA(Sec) + L-serine + ATP = L-seryl-tRNA(Sec) + AMP + diphosphate + H(+). It participates in aminoacyl-tRNA biosynthesis; selenocysteinyl-tRNA(Sec) biosynthesis; L-seryl-tRNA(Sec) from L-serine and tRNA(Sec): step 1/1. Catalyzes the attachment of serine to tRNA(Ser). Is also able to aminoacylate tRNA(Sec) with serine, to form the misacylated tRNA L-seryl-tRNA(Sec), which will be further converted into selenocysteinyl-tRNA(Sec). The chain is Serine--tRNA ligase from Janthinobacterium sp. (strain Marseille) (Minibacterium massiliensis).